We begin with the raw amino-acid sequence, 339 residues long: D-erythrose-4-phosphate dehydrogenase (339 aa).

Residue 12 to 13 (RI) participates in NAD(+) binding. Residues 154–156 (SCT), arginine 200, 213–214 (TK), and arginine 236 each bind substrate. The active-site Nucleophile is cysteine 155. Residue asparagine 318 coordinates NAD(+).

The protein belongs to the glyceraldehyde-3-phosphate dehydrogenase family. Epd subfamily. Homotetramer.

Its subcellular location is the cytoplasm. The enzyme catalyses D-erythrose 4-phosphate + NAD(+) + H2O = 4-phospho-D-erythronate + NADH + 2 H(+). The protein operates within cofactor biosynthesis; pyridoxine 5'-phosphate biosynthesis; pyridoxine 5'-phosphate from D-erythrose 4-phosphate: step 1/5. Its function is as follows. Catalyzes the NAD-dependent conversion of D-erythrose 4-phosphate to 4-phosphoerythronate. This is D-erythrose-4-phosphate dehydrogenase from Proteus mirabilis (strain HI4320).